The chain runs to 337 residues: MAVYKEAYPVDILEDDAEGYQAAAEAYYEMLREGAQTSAEVISLSTGEQVRLETSSLCFCTIYRDEPQHKILGLVNPQDTKTVVAVYLKESWWSIEDILRTSDPTREGLMKVQSFGERIVLFVLNVIVFGRLERRLHIDDMFFLPHPAKEQAKILWKDGAAVAFYSVKMKGSLCGDGTGTCYLLPVLDTVFVRRKNRCQGLGTAMLRDFCDTFQGDEALGISCPISPAMYRVLRQFLLTCPGERGRLWEVEPPGAWGQQRVNIWLKVYLQERRLQDGSTVHPKCSEEDTDTPGQASQEDGPTQFNHGESHKEWAVGEPERTQNGRRCAQVCEEARQV.

A disordered region spans residues Ser278–Arg326. Over residues Thr291–His306 the composition is skewed to polar residues. Over residues Gly307–Gln322 the composition is skewed to basic and acidic residues.

This sequence belongs to the FAM169 family.

This Mus musculus (Mouse) protein is Protein FAM169B (Fam169b).